A 584-amino-acid chain; its full sequence is Protein phosphatase 2A scaffold subunit (584 aa).

14 HEAT repeats span residues 7 to 45, 46 to 84, 86 to 123, 168 to 206, 207 to 239, 240 to 278, 279 to 317, 318 to 356, 358 to 395, 397 to 434, 441 to 479, 480 to 512, 513 to 551, and 553 to 584; these read ESDD…ALGP, ERTR…FVGG, EHAV…EIPT, LRKT…VKSE, ILPL…MLTN, EENI…SMGT, EITK…LLTK, EMNI…IYGK, DTLT…VIGI, MLSQ…QLGV, LGNL…AKNN, IIPK…VVGG, DVIS…LLDS, and IVQS…LQLC.

Belongs to the phosphatase 2A regulatory subunit A family. As to quaternary structure, component of the Sca1 complex composed of at least gefA, gefH, scaA, phr, and the protein phosphatase 2A subunits pppA and pho2B.

The protein resides in the cytoplasm. Its subcellular location is the cytosol. The protein localises to the cell membrane. Scaffolding molecule which may coordinate the assembly of the catalytic subunit and a variable regulatory B subunit. Component of the Sca1 complex, a regulator of cell motility, chemotaxis and signal relay. The Sca1 complex is recruited to the plasma membrane in a chemoattractant- and F-actin-dependent manner and is enriched at the leading edge of chemotaxing cells where it regulates F-actin dynamics and signal relay by controlling the activation of rasC and the downstream target of rapamycin complex 2 (TORC2)-Akt/protein kinase B (PKB) pathway. This is Protein phosphatase 2A scaffold subunit (pppA) from Dictyostelium discoideum (Social amoeba).